The following is a 253-amino-acid chain: DNA polymerase sliding clamp 2 (253 aa).

The protein belongs to the PCNA family. As to quaternary structure, homotrimer. The subunits circularize to form a toroid; DNA passes through its center. Replication factor C (RFC) is required to load the toroid on the DNA. Interacts with TIP.

With respect to regulation, inhibited by interaction with the PCNA inhibitor TIP. Sliding clamp subunit that acts as a moving platform for DNA processing. Responsible for tethering the catalytic subunit of DNA polymerase and other proteins to DNA during high-speed replication. This Thermococcus kodakarensis (strain ATCC BAA-918 / JCM 12380 / KOD1) (Pyrococcus kodakaraensis (strain KOD1)) protein is DNA polymerase sliding clamp 2.